The chain runs to 237 residues: D-aminoacyl-tRNA deacylase (237 aa).

Belongs to the DtdA deacylase family. Monomer. The cofactor is Zn(2+).

The catalysed reaction is a D-aminoacyl-tRNA + H2O = a tRNA + a D-alpha-amino acid + H(+). It catalyses the reaction glycyl-tRNA(Ala) + H2O = tRNA(Ala) + glycine + H(+). Its function is as follows. D-aminoacyl-tRNA deacylase with broad substrate specificity. By recycling D-aminoacyl-tRNA to D-amino acids and free tRNA molecules, this enzyme counteracts the toxicity associated with the formation of D-aminoacyl-tRNA entities in vivo. This is D-aminoacyl-tRNA deacylase from Saccharolobus islandicus (strain Y.N.15.51 / Yellowstone #2) (Sulfolobus islandicus).